Consider the following 430-residue polypeptide: Protein translocase subunit SecY (430 aa).

10 helical membrane-spanning segments follow: residues 18 to 38 (IFFTLAMLVIFKIGTYIPAPG), 68 to 88 (FSIFAMGIVPYITASIVMQLL), 117 to 137 (LAISLAFIQSIGMAFQFNNYL), 147 to 167 (IMSYLLIALVLTAGTAFLIWL), 179 to 199 (GISIIIFAGILSTLPASLIQF), 217 to 237 (VLGLLVSLILLTVGAIYVLEA), 269 to 289 (GVIPVIFAMAFFLLPRTLTLF), 308 to 328 (NVGMVVYIVLIILFTYFYAFV), 368 to 388 (FVGSIFLAVISILPILATKFM), and 389 to 409 (GLPQSIQIGGTSLLIVIGVAI).

Belongs to the SecY/SEC61-alpha family. As to quaternary structure, component of the Sec protein translocase complex. Heterotrimer consisting of SecY, SecE and SecG subunits. The heterotrimers can form oligomers, although 1 heterotrimer is thought to be able to translocate proteins. Interacts with the ribosome. Interacts with SecDF, and other proteins may be involved. Interacts with SecA.

The protein resides in the cell membrane. Its function is as follows. The central subunit of the protein translocation channel SecYEG. Consists of two halves formed by TMs 1-5 and 6-10. These two domains form a lateral gate at the front which open onto the bilayer between TMs 2 and 7, and are clamped together by SecE at the back. The channel is closed by both a pore ring composed of hydrophobic SecY resides and a short helix (helix 2A) on the extracellular side of the membrane which forms a plug. The plug probably moves laterally to allow the channel to open. The ring and the pore may move independently. The chain is Protein translocase subunit SecY from Staphylococcus aureus (strain NCTC 8325 / PS 47).